A 564-amino-acid chain; its full sequence is uncharacterized protein (564 aa).

Positions 1–21 are cleaved as a signal peptide; that stretch reads MRRIGAITALSLPVLLSLLYS. Residue Cys22 is the site of N-palmitoyl cysteine attachment. Cys22 carries S-diacylglycerol cysteine lipidation.

It localises to the cell membrane. This is an uncharacterized protein from Aquifex aeolicus (strain VF5).